The following is a 229-amino-acid chain: UPF0758 protein CA_C1241 (229 aa).

The MPN domain maps to 107–229 (KITSPKEAAN…YISLKEEGLL (123 aa)). Zn(2+)-binding residues include histidine 178, histidine 180, and aspartate 191. The JAMM motif signature appears at 178–191 (HNHPSGDPKPSNED).

It belongs to the UPF0758 family.

The polypeptide is UPF0758 protein CA_C1241 (Clostridium acetobutylicum (strain ATCC 824 / DSM 792 / JCM 1419 / IAM 19013 / LMG 5710 / NBRC 13948 / NRRL B-527 / VKM B-1787 / 2291 / W)).